A 248-amino-acid chain; its full sequence is Large ribosomal subunit protein uL10m (248 aa).

The N-terminal 24 residues, 1–24 (MATLIQRSLSLAKSSTPALQFLRF), are a transit peptide targeting the mitochondrion.

This sequence belongs to the universal ribosomal protein uL10 family. In terms of assembly, component of the mitochondrial ribosome large subunit (39S) which comprises a 16S rRNA and about 50 distinct proteins.

The protein resides in the mitochondrion. This Drosophila melanogaster (Fruit fly) protein is Large ribosomal subunit protein uL10m (mRpL10).